The primary structure comprises 595 residues: MGIKGLTKFIADAAPNAIKEIKIENLMGRVVAIDASMSLYQFIIAIRDSEQYGNLTNESGETTSHISGLMSRSIKLMENGLKPIYVFDGAPPELKGSELEKRGEKRQKAEELLKKAKEEGNLEEIKKQSGRTVRVTKKQNEEAKKLLTLMGIPVVEAPCEAESQCAFLTKYNLAHATATEDADALVFGTKILIRNLNANASSTSQNKNKNSSKRGYILTEINLEQVLKGLNLNMNEFIDFCILCGCDYCDTIKGIGSKTAYNLIKEYNSIEKIIENIDKNKYQIPSNFRFVEARDSFINPKVLSKEEIKIDWGEPKIEELKNFLIKDYNFNEVRVTNYINRLLKARKVTTQRRLDNFFTACTKKSTKLVNEESQIKKEVKPKRKGKKRDAPNDSSTKLNSKQNKKPKGEKESKTEKDDGDTHNGNDNEEEGGEGETADMGAKDPFDTEEDEDNPSVNFFHHKSDSESGNVKKESTEQEANATPTGDVYSFPNGKDASGSNIHLSSNSTLHSCNNLNGDKAINESMHVVGSSAPEAGNNEIGNGDLFTSNAADCVNNNTDKTQAEIEMKKKNISFLLPYCPKNVTSVKKRKSVQRC.

An N-domain region spans residues 1 to 106 (MGIKGLTKFI…SELEKRGEKR (106 aa)). A Mg(2+)-binding site is contributed by Asp34. Residues Arg47 and Arg72 each contribute to the DNA site. Mg(2+)-binding residues include Asp88, Glu160, Glu162, Asp181, and Asp183. The tract at residues 124–267 (EIKKQSGRTV…KTAYNLIKEY (144 aa)) is I-domain. Glu160 contacts DNA. The DNA site is built by Gly245 and Asp247. Asp247 is a Mg(2+) binding site. Residues 350–358 (TQRRLDNFF) form an interaction with PCNA region. The disordered stretch occupies residues 370-493 (NEESQIKKEV…TGDVYSFPNG (124 aa)). Positions 392–401 (NDSSTKLNSK) are enriched in polar residues. Residues 406-425 (PKGEKESKTEKDDGDTHNGN) show a composition bias toward basic and acidic residues. Over residues 426-436 (DNEEEGGEGET) the composition is skewed to acidic residues. A compositionally biased stretch (basic and acidic residues) spans 461-475 (HKSDSESGNVKKEST).

Belongs to the XPG/RAD2 endonuclease family. FEN1 subfamily. As to quaternary structure, interacts with PCNA. Three molecules of FEN1 bind to one PCNA trimer with each molecule binding to one PCNA monomer. PCNA stimulates the nuclease activity without altering cleavage specificity. Mg(2+) is required as a cofactor. Post-translationally, phosphorylated. Phosphorylation upon DNA damage induces relocalization to the nuclear plasma.

It is found in the nucleus. The protein resides in the nucleolus. The protein localises to the nucleoplasm. Its subcellular location is the mitochondrion. Its function is as follows. Structure-specific nuclease with 5'-flap endonuclease and 5'-3' exonuclease activities involved in DNA replication and repair. During DNA replication, cleaves the 5'-overhanging flap structure that is generated by displacement synthesis when DNA polymerase encounters the 5'-end of a downstream Okazaki fragment. It enters the flap from the 5'-end and then tracks to cleave the flap base, leaving a nick for ligation. Also involved in the long patch base excision repair (LP-BER) pathway, by cleaving within the apurinic/apyrimidinic (AP) site-terminated flap. Acts as a genome stabilization factor that prevents flaps from equilibrating into structures that lead to duplications and deletions. Also possesses 5'-3' exonuclease activity on nicked or gapped double-stranded DNA, and exhibits RNase H activity. Also involved in replication and repair of rDNA and in repairing mitochondrial DNA. The chain is Flap endonuclease 1 from Plasmodium knowlesi (strain H).